Reading from the N-terminus, the 470-residue chain is MTELPDNTRWQLWIVAFGFFMQSLDTTIVNTALPSMAKSLGESPLHMHMVVVSYVLTVAVMLPASGWLADKIGVRNIFFAAIVLFTLGSLFCALSGTLNQLVLARVLQGVGGAMMVPVGRLTVMKIVPRAQYMAAMTFVTLPGQIGPLLGPALGGVLVEYASWHWIFLINIPVGIVGAMATFMLMPNYTIETRRFDLPGFLLLAIGMAVLTLALDGSKSMGISPWTLAGLAAGGAAAILLYLFHAKKNSGALFSLRLFRTPTFSLGLLGSFAGRIGSGMLPFMTPVFLQIGLGFSPFHAGLMMIPMVLGSMGMKRIVVQIVNRFGYRRVLVATTLGLALVSLLFMSVALLGWYYLLPLVLLLQGMVNSARFSSMNTLTLKDLPDTLASSGNSLLSMIMQLSMSIGVTIAGMLLGMFGQQHIGIDSSATHHVFMYTWLCMAVIIALPAIIFARVPNDTQQNMVISRRKRSL.

The Periplasmic portion of the chain corresponds to 1-11 (MTELPDNTRWQ). A helical transmembrane segment spans residues 12–32 (LWIVAFGFFMQSLDTTIVNTA). Topologically, residues 33–48 (LPSMAKSLGESPLHMH) are cytoplasmic. The chain crosses the membrane as a helical span at residues 49-69 (MVVVSYVLTVAVMLPASGWLA). The Periplasmic portion of the chain corresponds to 70-76 (DKIGVRN). Residues 77–97 (IFFAAIVLFTLGSLFCALSGT) traverse the membrane as a helical segment. The Cytoplasmic portion of the chain corresponds to 98–101 (LNQL). A helical transmembrane segment spans residues 102–124 (VLARVLQGVGGAMMVPVGRLTVM). Residues 125-137 (KIVPRAQYMAAMT) lie on the Periplasmic side of the membrane. A helical transmembrane segment spans residues 138–158 (FVTLPGQIGPLLGPALGGVLV). At 159–164 (EYASWH) the chain is on the cytoplasmic side. The helical transmembrane segment at 165 to 185 (WIFLINIPVGIVGAMATFMLM) threads the bilayer. Residues 186–196 (PNYTIETRRFD) are Periplasmic-facing. A helical transmembrane segment spans residues 197–217 (LPGFLLLAIGMAVLTLALDGS). Over 218 to 224 (KSMGISP) the chain is Cytoplasmic. The chain crosses the membrane as a helical span at residues 225–245 (WTLAGLAAGGAAAILLYLFHA). The Periplasmic portion of the chain corresponds to 246–262 (KKNSGALFSLRLFRTPT). A helical transmembrane segment spans residues 263-283 (FSLGLLGSFAGRIGSGMLPFM). The Cytoplasmic portion of the chain corresponds to 284–285 (TP). A helical transmembrane segment spans residues 286-306 (VFLQIGLGFSPFHAGLMMIPM). Over 307-341 (VLGSMGMKRIVVQIVNRFGYRRVLVATTLGLALVS) the chain is Periplasmic. A helical transmembrane segment spans residues 342–362 (LLFMSVALLGWYYLLPLVLLL). Topologically, residues 363 to 395 (QGMVNSARFSSMNTLTLKDLPDTLASSGNSLLS) are cytoplasmic. A helical membrane pass occupies residues 396-416 (MIMQLSMSIGVTIAGMLLGMF). Topologically, residues 417 to 430 (GQQHIGIDSSATHH) are periplasmic. A helical transmembrane segment spans residues 431–451 (VFMYTWLCMAVIIALPAIIFA). The Cytoplasmic portion of the chain corresponds to 452 to 470 (RVPNDTQQNMVISRRKRSL).

The protein belongs to the major facilitator superfamily. TCR/Tet family.

The protein localises to the cell inner membrane. The chain is Putative multidrug resistance protein MdtD from Salmonella agona (strain SL483).